The sequence spans 445 residues: Tubulin beta-4 chain (445 aa).

An MREI motif motif is present at residues 1 to 4; the sequence is MREI. GTP-binding residues include glutamine 11, glutamate 69, serine 138, glycine 142, threonine 143, glycine 144, asparagine 204, and asparagine 226. Position 69 (glutamate 69) interacts with Mg(2+). The segment at 425–445 is disordered; sequence YQDATAEEEGEFEEGEEEENA. A compositionally biased stretch (acidic residues) spans 429 to 445; that stretch reads TAEEEGEFEEGEEEENA. Residue glutamate 438 is modified to 5-glutamyl polyglutamate.

This sequence belongs to the tubulin family. As to quaternary structure, dimer of alpha and beta chains. A typical microtubule is a hollow water-filled tube with an outer diameter of 25 nm and an inner diameter of 15 nM. Alpha-beta heterodimers associate head-to-tail to form protofilaments running lengthwise along the microtubule wall with the beta-tubulin subunit facing the microtubule plus end conferring a structural polarity. Microtubules usually have 13 protofilaments but different protofilament numbers can be found in some organisms and specialized cells. It depends on Mg(2+) as a cofactor. Some glutamate residues at the C-terminus are polyglycylated, resulting in polyglycine chains on the gamma-carboxyl group. Glycylation is mainly limited to tubulin incorporated into axonemes (cilia and flagella) whereas glutamylation is prevalent in neuronal cells, centrioles, axonemes, and the mitotic spindle. Both modifications can coexist on the same protein on adjacent residues, and lowering polyglycylation levels increases polyglutamylation, and reciprocally. The precise function of polyglycylation is still unclear. Post-translationally, some glutamate residues at the C-terminus are polyglutamylated, resulting in polyglutamate chains on the gamma-carboxyl group. Polyglutamylation plays a key role in microtubule severing by spastin (SPAST). SPAST preferentially recognizes and acts on microtubules decorated with short polyglutamate tails: severing activity by SPAST increases as the number of glutamates per tubulin rises from one to eight, but decreases beyond this glutamylation threshold. As to expression, preferential expression in germ cells.

The protein resides in the cytoplasm. Its subcellular location is the cytoskeleton. Its function is as follows. Tubulin is the major constituent of microtubules, a cylinder consisting of laterally associated linear protofilaments composed of alpha- and beta-tubulin heterodimers. Microtubules grow by the addition of GTP-tubulin dimers to the microtubule end, where a stabilizing cap forms. Below the cap, tubulin dimers are in GDP-bound state, owing to GTPase activity of alpha-tubulin. This Xenopus laevis (African clawed frog) protein is Tubulin beta-4 chain (tubb4).